Reading from the N-terminus, the 284-residue chain is Tryptophan 2,3-dioxygenase (284 aa).

Residues 51 to 55 (FIIQH), Tyr113, and Arg117 contribute to the substrate site. His240 is a heme binding site. Thr254 is a substrate binding site.

It belongs to the tryptophan 2,3-dioxygenase family. As to quaternary structure, homotetramer. Heme is required as a cofactor.

It catalyses the reaction L-tryptophan + O2 = N-formyl-L-kynurenine. It participates in amino-acid degradation; L-tryptophan degradation via kynurenine pathway; L-kynurenine from L-tryptophan: step 1/2. Functionally, heme-dependent dioxygenase that catalyzes the oxidative cleavage of the L-tryptophan (L-Trp) pyrrole ring and converts L-tryptophan to N-formyl-L-kynurenine. Catalyzes the oxidative cleavage of the indole moiety. The chain is Tryptophan 2,3-dioxygenase from Rhodococcus jostii (strain RHA1).